The sequence spans 340 residues: Hyaluronan and proteoglycan link protein 2 (340 aa).

The N-terminal stretch at 1–26 (MPGWLTLPTLCRFLLWAFTIFHKAQG) is a signal peptide. Residues 34–144 (PHYLLPPIHE…EDESVALTLS (111 aa)) form the Ig-like V-type domain. 5 disulfides stabilise this stretch: C57/C128, C170/C240, C194/C215, C265/C336, and C290/C311. Link domains lie at 148–242 (VVFP…FCFT) and 245–338 (LAGQ…YCYA).

This sequence belongs to the HAPLN family. In terms of tissue distribution, expressed only in adult brain.

The protein resides in the secreted. The protein localises to the extracellular space. Its subcellular location is the extracellular matrix. Its function is as follows. Mediates a firm binding of versican V2 to hyaluronic acid. May play a pivotal role in the formation of the hyaluronan-associated matrix in the central nervous system (CNS) which facilitates neuronal conduction and general structural stabilization. Binds to hyaluronic acid. The protein is Hyaluronan and proteoglycan link protein 2 (HAPLN2) of Homo sapiens (Human).